We begin with the raw amino-acid sequence, 721 residues long: uncharacterized protein (721 aa).

Residues Q6–L26 traverse the membrane as a helical segment. Residue G308–T315 participates in ATP binding.

This sequence belongs to the GSP E family. Post-translationally, this protein undergoes a protein self splicing that involves a post-translational excision of the intervening region (intein) followed by peptide ligation.

The protein localises to the membrane. This is an uncharacterized protein from Methanocaldococcus jannaschii (strain ATCC 43067 / DSM 2661 / JAL-1 / JCM 10045 / NBRC 100440) (Methanococcus jannaschii).